The sequence spans 268 residues: NADPH-dependent 7-cyano-7-deazaguanine reductase (268 aa).

Substrate is bound at residue 79-81 (VES). 81 to 82 (SK) is an NADPH binding site. The active-site Thioimide intermediate is the cysteine 176. The active-site Proton donor is the aspartate 183. Residue 215-216 (HE) coordinates substrate. An NADPH-binding site is contributed by 244–245 (RG).

Belongs to the GTP cyclohydrolase I family. QueF type 2 subfamily. Homodimer.

Its subcellular location is the cytoplasm. It carries out the reaction 7-aminomethyl-7-carbaguanine + 2 NADP(+) = 7-cyano-7-deazaguanine + 2 NADPH + 3 H(+). It functions in the pathway tRNA modification; tRNA-queuosine biosynthesis. Functionally, catalyzes the NADPH-dependent reduction of 7-cyano-7-deazaguanine (preQ0) to 7-aminomethyl-7-deazaguanine (preQ1). This Saccharophagus degradans (strain 2-40 / ATCC 43961 / DSM 17024) protein is NADPH-dependent 7-cyano-7-deazaguanine reductase.